The chain runs to 351 residues: Porphobilinogen deaminase (351 aa).

Cys-242 carries the post-translational modification S-(dipyrrolylmethanemethyl)cysteine.

The protein belongs to the HMBS family. In terms of assembly, monomer. Dipyrromethane serves as cofactor.

It carries out the reaction 4 porphobilinogen + H2O = hydroxymethylbilane + 4 NH4(+). It functions in the pathway porphyrin-containing compound metabolism; protoporphyrin-IX biosynthesis; coproporphyrinogen-III from 5-aminolevulinate: step 2/4. Tetrapolymerization of the monopyrrole PBG into the hydroxymethylbilane pre-uroporphyrinogen in several discrete steps. In Rickettsia rickettsii (strain Sheila Smith), this protein is Porphobilinogen deaminase.